The sequence spans 161 residues: Allophycocyanin alpha chain (161 aa).

N71 is modified (N4-methylasparagine). C81 lines the (2R,3E)-phycocyanobilin pocket.

This sequence belongs to the phycobiliprotein family. Heterodimer of an alpha and a beta chain. Contains one covalently linked phycocyanobilin chromophore.

The protein localises to the plastid. It localises to the chloroplast thylakoid membrane. Functionally, light-harvesting photosynthetic bile pigment-protein from the phycobiliprotein complex. Allophycocyanin has a maximum absorption at approximately 650 nanometers. The polypeptide is Allophycocyanin alpha chain (apcA) (Porphyra purpurea (Red seaweed)).